A 501-amino-acid polypeptide reads, in one-letter code: 2,3-bisphosphoglycerate-independent phosphoglycerate mutase (501 aa).

Residues Asp-12 and Ser-62 each contribute to the Mn(2+) site. Ser-62 functions as the Phosphoserine intermediate in the catalytic mechanism. Residues His-121, 150 to 151 (RD), Arg-182, Arg-188, 253 to 256 (RSDR), and Lys-323 each bind substrate. Residues Asp-390, His-394, Asp-431, His-432, and His-450 each contribute to the Mn(2+) site.

It belongs to the BPG-independent phosphoglycerate mutase family. In terms of assembly, monomer. Mn(2+) serves as cofactor.

The catalysed reaction is (2R)-2-phosphoglycerate = (2R)-3-phosphoglycerate. The protein operates within carbohydrate degradation; glycolysis; pyruvate from D-glyceraldehyde 3-phosphate: step 3/5. Catalyzes the interconversion of 2-phosphoglycerate and 3-phosphoglycerate. In Ehrlichia canis (strain Jake), this protein is 2,3-bisphosphoglycerate-independent phosphoglycerate mutase.